We begin with the raw amino-acid sequence, 358 residues long: Myb family transcription factor IPN2 (358 aa).

The disordered stretch occupies residues 1-20 (MERMFPPKKPSTMNSHDRPM). Residues 32 to 92 (TDPKPRLRWT…HLQKFRLGKQ (61 aa)) form the HTH myb-type domain. A DNA-binding region (H-T-H motif) is located at residues 63–88 (PKTIMRVMGVKGLTLYHLKSHLQKFR). Residues 127–171 (NMNEMQIEVQRRLHEQLEVQKHLQLRIEAQGKYMQSILEKAYQTL) are a coiled coil. The LHEQLE signature appears at 139-144 (LHEQLE). The segment at 310–358 (IYDSKPEEKKFDASMKLERPSPRRAPLGERMSPMITTGTMAQGRSSPFG) is disordered. The segment covering 311 to 330 (YDSKPEEKKFDASMKLERPS) has biased composition (basic and acidic residues). Residues 343–358 (MITTGTMAQGRSSPFG) are compositionally biased toward polar residues.

It belongs to the MYB-CC family. Interacts with NSP2. As to expression, expressed in leaves, stems, nodules and roots.

Its subcellular location is the nucleus. In terms of biological role, transcriptional regulator required for Nod-factor-induced gene expression. Transcription activator involved in the induction of NIN and ENOD40 genes, which are required for rhizobial infection and early nodule development. Possesses strong transactivation activity in vitro. Does not seem to contribute to the early steps of the arbuscular mycorrhizal fungus infection and colonization processes in roots. This is Myb family transcription factor IPN2 from Lotus japonicus (Lotus corniculatus var. japonicus).